We begin with the raw amino-acid sequence, 410 residues long: Zinc finger protein 322 (410 aa).

8 consecutive C2H2-type zinc fingers follow at residues 81 to 103 (YRCDMCEKTFIQSSDLISHQRIH), 109 to 131 (YKCSKCEKSFWHHLALSGHQRTH), 137 to 159 (YTCDICGKNFGQSSDLLVHQRSH), 165 to 187 (YLCNECDKCFSRSTNLIRHRRTH), 193 to 215 (FKCLECEKAFSGKSDLISHQRTH), 221 to 243 (YKCNKCEKSYRHRSAFIVHKRVH), 249 to 271 (YKCGACEKCFGQKSDLIVHQRVH), and 277 to 299 (YKCLECMRSFTRSANLIRHQATH). The C2H2-type 9; degenerate zinc finger occupies 303–325 (FKCLEYEKSFNCSSDFIVHQRIH). Residues 361–383 (YKYSVCDKTFHHSSALLQHQTVH) form a C2H2-type 10; degenerate zinc finger. S400 carries the post-translational modification Phosphoserine.

This sequence belongs to the krueppel C2H2-type zinc-finger protein family. As to quaternary structure, interacts with POU5F1.

The protein resides in the nucleus. The protein localises to the cytoplasm. Functionally, transcriptional activator. Important for maintenance of pluripotency in embryonic stem cells. Binds directly to the POU5F1 distal enhancer and the NANOG proximal promoter, and enhances expression of both genes. Can also bind to numerous other gene promoters and regulates expression of many other pluripotency factors, either directly or indirectly. Promotes inhibition of MAPK signaling during embryonic stem cell differentiation. The polypeptide is Zinc finger protein 322 (Znf322) (Mus musculus (Mouse)).